The chain runs to 212 residues: MFILSKIADLVRIPPDQFHRDTISAITHQLNNKFANKIIPNVGLCITIYDLLTVEEGQLKPGDGSSYINVTFRAVVFKPFLGEIVTGWISKCTAEGIKVSLLGIFDDIFIPQNMLFEGCYYTPEESAWIWPMDEETKLYFDVNEKIRFRIEREVFVDVKPKSPKERELEERAQLENEIEGKNEETPQNEKPPAYALLGSCQTDGMGLVSWWE.

S162 carries the post-translational modification Phosphoserine. The segment covering 166-184 (RELEERAQLENEIEGKNEE) has biased composition (basic and acidic residues). The interval 166 to 194 (RELEERAQLENEIEGKNEETPQNEKPPAY) is disordered.

This sequence belongs to the eukaryotic RPB7/RPC8 RNA polymerase subunit family. Component of the RNA polymerase III (Pol III) complex consisting of 17 subunits. RPC25/RPC8 and RPC17/RPC9 form a Pol III subcomplex.

It is found in the nucleus. Functionally, DNA-dependent RNA polymerase catalyzes the transcription of DNA into RNA using the four ribonucleoside triphosphates as substrates. Specific peripheric component of RNA polymerase III which synthesizes small RNAs, such as 5S rRNA and tRNA. The RPC25/RPC8-RPC17/RPC9 subcomplex may bind Pol III transcripts emerging from the adjacent exit pore during elongation. The sequence is that of DNA-directed RNA polymerase III subunit RPC8 (RPC25) from Saccharomyces cerevisiae (strain ATCC 204508 / S288c) (Baker's yeast).